The chain runs to 142 residues: Hemoglobin subunit alpha-A (142 aa).

Residues 2–142 (VLSANDKTNV…VGNVLTAKYR (141 aa)) enclose the Globin domain. His-59 serves as a coordination point for O2. A heme b-binding site is contributed by His-88.

It belongs to the globin family. In terms of assembly, heterotetramer of two alpha chains and two beta chains. Red blood cells.

Involved in oxygen transport from the lung to the various peripheral tissues. In Aquila chrysaetos (Golden eagle), this protein is Hemoglobin subunit alpha-A (HBAA).